The sequence spans 398 residues: DNA replication and repair protein RecF (398 aa).

30-37 (GRNGFGKT) contributes to the ATP binding site.

The protein belongs to the RecF family.

The protein localises to the cytoplasm. Functionally, the RecF protein is involved in DNA metabolism; it is required for DNA replication and normal SOS inducibility. RecF binds preferentially to single-stranded, linear DNA. It also seems to bind ATP. This Corynebacterium efficiens (strain DSM 44549 / YS-314 / AJ 12310 / JCM 11189 / NBRC 100395) protein is DNA replication and repair protein RecF.